A 37-amino-acid chain; its full sequence is U1-ectatotoxin-Eb1a subunit B (37 aa).

The protein belongs to the ectatomin family. Ectatomin-Eq subfamily. Heterodimer of subunits A and B; disulfide-linked. Expressed by the venom gland.

The protein resides in the secreted. It localises to the target cell membrane. The protein is U1-ectatotoxin-Eb1a subunit B of Ectatomma brunneum (Ant).